The primary structure comprises 366 residues: Flagellar P-ring protein (366 aa).

Positions 1-20 (MVIKFLSALILLLVTTAAQA) are cleaved as a signal peptide.

Belongs to the FlgI family. The basal body constitutes a major portion of the flagellar organelle and consists of four rings (L,P,S, and M) mounted on a central rod.

Its subcellular location is the periplasm. It localises to the bacterial flagellum basal body. Functionally, assembles around the rod to form the L-ring and probably protects the motor/basal body from shearing forces during rotation. The polypeptide is Flagellar P-ring protein (Escherichia coli (strain UTI89 / UPEC)).